Here is a 389-residue protein sequence, read N- to C-terminus: tRNA(Met) cytidine acetate ligase (389 aa).

Residues 8–21 (IAEF…HEYL), G97, N153, and R176 contribute to the ATP site.

Belongs to the TmcAL family.

The protein localises to the cytoplasm. The enzyme catalyses cytidine(34) in elongator tRNA(Met) + acetate + ATP = N(4)-acetylcytidine(34) in elongator tRNA(Met) + AMP + diphosphate. Catalyzes the formation of N(4)-acetylcytidine (ac(4)C) at the wobble position of elongator tRNA(Met), using acetate and ATP as substrates. First activates an acetate ion to form acetyladenylate (Ac-AMP) and then transfers the acetyl group to tRNA to form ac(4)C34. This is tRNA(Met) cytidine acetate ligase from Lactococcus lactis subsp. cremoris (strain SK11).